We begin with the raw amino-acid sequence, 396 residues long: 1-deoxy-D-xylulose 5-phosphate reductoisomerase (396 aa).

Residues Thr-10, Gly-11, Ser-12, Ile-13, and Asn-123 each contribute to the NADPH site. Residue Lys-124 participates in 1-deoxy-D-xylulose 5-phosphate binding. Residue Glu-125 participates in NADPH binding. Asp-149 contributes to the Mn(2+) binding site. 4 residues coordinate 1-deoxy-D-xylulose 5-phosphate: Ser-150, Glu-151, Ser-185, and His-208. Position 151 (Glu-151) interacts with Mn(2+). Residue Gly-214 participates in NADPH binding. 1-deoxy-D-xylulose 5-phosphate is bound by residues Ser-221, Asn-226, Lys-227, and Glu-230. Glu-230 provides a ligand contact to Mn(2+).

This sequence belongs to the DXR family. Mg(2+) is required as a cofactor. Requires Mn(2+) as cofactor.

It catalyses the reaction 2-C-methyl-D-erythritol 4-phosphate + NADP(+) = 1-deoxy-D-xylulose 5-phosphate + NADPH + H(+). The protein operates within isoprenoid biosynthesis; isopentenyl diphosphate biosynthesis via DXP pathway; isopentenyl diphosphate from 1-deoxy-D-xylulose 5-phosphate: step 1/6. Its function is as follows. Catalyzes the NADPH-dependent rearrangement and reduction of 1-deoxy-D-xylulose-5-phosphate (DXP) to 2-C-methyl-D-erythritol 4-phosphate (MEP). This chain is 1-deoxy-D-xylulose 5-phosphate reductoisomerase, found in Shewanella baltica (strain OS223).